The following is a 361-amino-acid chain: WAT1-related protein At4g01450 (361 aa).

The next 10 helical transmembrane spans lie at 8–28, 40–60, 76–96, 103–123, 132–152, 177–197, 209–229, 243–263, 273–293, and 298–318; these read WAPMIVLIVSNMIAGMVNALV, VIATYRLGISTLFLLPVAYFW, LFVSALFGASLMQYFYLLGLS, GSAFWAIMPSLTFVMALIFGF, IGYGVVLGTLISLVGGLLLTM, WIKGCFFLLTGVVLFSSWMLI, YSSTVILSVFGTLQCALLSLI, LTIITVVIAGVVAQGMCTVGM, VVSSSFSPVVLMSATVFDFLI, and IYLGSVIGSVVVVIGLYIFLW. EamA domains follow at residues 21–142 and 194–317; these read AGMV…GTLI and WMLI…YIFL.

Belongs to the drug/metabolite transporter (DMT) superfamily. Plant drug/metabolite exporter (P-DME) (TC 2.A.7.4) family.

It localises to the membrane. In Arabidopsis thaliana (Mouse-ear cress), this protein is WAT1-related protein At4g01450.